The chain runs to 325 residues: Bifunctional ligase/repressor BirA (325 aa).

The H-T-H motif DNA-binding region spans 23-42 (GQKISDALGCSRTAVWKHIE). The region spanning 74-262 (RFGLKTEVMG…CFEKRYRDYM (189 aa)) is the BPL/LPL catalytic domain. Residues Gln118, 122–124 (RGR), and Lys189 each bind biotin.

The protein belongs to the biotin--protein ligase family.

It carries out the reaction biotin + L-lysyl-[protein] + ATP = N(6)-biotinyl-L-lysyl-[protein] + AMP + diphosphate + H(+). Acts both as a biotin--[acetyl-CoA-carboxylase] ligase and a repressor. The polypeptide is Bifunctional ligase/repressor BirA (Bacillus spizizenii (strain ATCC 23059 / NRRL B-14472 / W23) (Bacillus subtilis subsp. spizizenii)).